The sequence spans 320 residues: ATP-dependent 6-phosphofructokinase (320 aa).

An ATP-binding site is contributed by Gly-12. Residues 22 to 26 (RGVVR) and 55 to 60 (RYSVSD) each bind ADP. ATP-binding positions include 73–74 (RF) and 103–106 (GDGS). Position 104 (Asp-104) interacts with Mg(2+). 126-128 (TID) lines the substrate pocket. Residue Asp-128 is the Proton acceptor of the active site. An ADP-binding site is contributed by Arg-155. Substrate is bound by residues Arg-163 and 170-172 (MGR). Residues 186–188 (GCE), Lys-212, and 214–216 (KKH) each bind ADP. Substrate-binding positions include Glu-223, Arg-244, and 250–253 (HIQR).

The protein belongs to the phosphofructokinase type A (PFKA) family. ATP-dependent PFK group I subfamily. Prokaryotic clade 'B1' sub-subfamily. As to quaternary structure, homotetramer. Mg(2+) serves as cofactor.

The protein resides in the cytoplasm. It catalyses the reaction beta-D-fructose 6-phosphate + ATP = beta-D-fructose 1,6-bisphosphate + ADP + H(+). The protein operates within carbohydrate degradation; glycolysis; D-glyceraldehyde 3-phosphate and glycerone phosphate from D-glucose: step 3/4. Allosterically activated by ADP and other diphosphonucleosides, and allosterically inhibited by phosphoenolpyruvate. Catalyzes the phosphorylation of D-fructose 6-phosphate to fructose 1,6-bisphosphate by ATP, the first committing step of glycolysis. This chain is ATP-dependent 6-phosphofructokinase, found in Serratia proteamaculans (strain 568).